Reading from the N-terminus, the 77-residue chain is U14-theraphotoxin-Cg1b (77 aa).

The N-terminal stretch at 1–21 is a signal peptide; sequence MKTSVLLVILGIAAITVQCTA. Residues 22 to 49 constitute a propeptide that is removed on maturation; sequence SESVEQDSLRTFVDAVLGWNAEMASEAR. Intrachain disulfides connect Cys-50–Cys-64, Cys-57–Cys-69, and Cys-63–Cys-75.

This sequence belongs to the neurotoxin 10 (Hwtx-1) family. 65 (Jztx-21) subfamily. As to expression, expressed by the venom gland.

It localises to the secreted. Its function is as follows. Probable ion channel inhibitor. In Chilobrachys guangxiensis (Chinese earth tiger tarantula), this protein is U14-theraphotoxin-Cg1b.